The sequence spans 451 residues: Ribulose bisphosphate carboxylase large chain (451 aa).

Lysine 5 is modified (N6,N6,N6-trimethyllysine). Residues asparagine 114 and threonine 164 each coordinate substrate. Residue lysine 166 is the Proton acceptor of the active site. Lysine 168 lines the substrate pocket. Mg(2+)-binding residues include lysine 192, aspartate 194, and glutamate 195. Lysine 192 is modified (N6-carboxylysine). Histidine 285 serves as the catalytic Proton acceptor. Substrate is bound by residues arginine 286, histidine 318, and serine 370.

Belongs to the RuBisCO large chain family. Type I subfamily. As to quaternary structure, heterohexadecamer of 8 large chains and 8 small chains; disulfide-linked. The disulfide link is formed within the large subunit homodimers. It depends on Mg(2+) as a cofactor. In terms of processing, the disulfide bond which can form in the large chain dimeric partners within the hexadecamer appears to be associated with oxidative stress and protein turnover.

Its subcellular location is the plastid. The protein resides in the chloroplast. It catalyses the reaction 2 (2R)-3-phosphoglycerate + 2 H(+) = D-ribulose 1,5-bisphosphate + CO2 + H2O. The enzyme catalyses D-ribulose 1,5-bisphosphate + O2 = 2-phosphoglycolate + (2R)-3-phosphoglycerate + 2 H(+). In terms of biological role, ruBisCO catalyzes two reactions: the carboxylation of D-ribulose 1,5-bisphosphate, the primary event in carbon dioxide fixation, as well as the oxidative fragmentation of the pentose substrate in the photorespiration process. Both reactions occur simultaneously and in competition at the same active site. The protein is Ribulose bisphosphate carboxylase large chain of Aristea glauca.